Consider the following 129-residue polypeptide: uncharacterized protein (129 aa).

The chain crosses the membrane as a helical span at residues I77–L97. The segment at S109–A129 is disordered. The segment covering N111–A129 has biased composition (basic and acidic residues).

It localises to the vacuole membrane. This is an uncharacterized protein from Saccharomyces cerevisiae (strain ATCC 204508 / S288c) (Baker's yeast).